Here is a 233-residue protein sequence, read N- to C-terminus: RNA-free ribonuclease P (233 aa).

The protein belongs to the HARP family.

The enzyme catalyses Endonucleolytic cleavage of RNA, removing 5'-extranucleotides from tRNA precursor.. Its function is as follows. RNA-free RNase P that catalyzes the removal of the 5'-leader sequence from pre-tRNA to produce the mature 5'-terminus. This is RNA-free ribonuclease P from Methanocaldococcus jannaschii (strain ATCC 43067 / DSM 2661 / JAL-1 / JCM 10045 / NBRC 100440) (Methanococcus jannaschii).